The following is a 309-amino-acid chain: Jacalin-related lectin 25 (309 aa).

A Jacalin-type lectin domain is found at 8–190; that stretch reads MFKVGPIGSQ…LTSIGIYVCP (183 aa).

It belongs to the jacalin lectin family.

The polypeptide is Jacalin-related lectin 25 (JAL25) (Arabidopsis thaliana (Mouse-ear cress)).